We begin with the raw amino-acid sequence, 251 residues long: Orotidine 5'-phosphate decarboxylase (251 aa).

Residues Asp-19, Lys-42, 69–78 (DLKFHDIPNT), Thr-133, Arg-194, Gln-204, Gly-224, and Arg-225 contribute to the substrate site. Lys-71 functions as the Proton donor in the catalytic mechanism.

This sequence belongs to the OMP decarboxylase family. Type 1 subfamily. As to quaternary structure, homodimer.

It catalyses the reaction orotidine 5'-phosphate + H(+) = UMP + CO2. It functions in the pathway pyrimidine metabolism; UMP biosynthesis via de novo pathway; UMP from orotate: step 2/2. Its function is as follows. Catalyzes the decarboxylation of orotidine 5'-monophosphate (OMP) to uridine 5'-monophosphate (UMP). The polypeptide is Orotidine 5'-phosphate decarboxylase (Syntrophus aciditrophicus (strain SB)).